A 177-amino-acid chain; its full sequence is UBA-like domain-containing protein 1 (177 aa).

The interval Glu-89 to Arg-177 is disordered. Residues Pro-112 to Gln-138 are compositionally biased toward low complexity. Pro residues predominate over residues Pro-139–Pro-151. A compositionally biased stretch (basic and acidic residues) spans Pro-167–Arg-177.

Belongs to the UBALD family.

The protein is UBA-like domain-containing protein 1 (UBALD1) of Homo sapiens (Human).